Here is a 417-residue protein sequence, read N- to C-terminus: MEVNPPKQEHLLALKVMRLTKPTLFTNIPVTCEEKDLPGDLFNQLMRDDPSTVNGAEILMLGEMLTLPQNFGNIFLGETFSSYISVHNDSNQVVKDILVKADLQTSSQRLNLSASNAAVAELKPDCCIDDVIHHEVKEIGTHILVCAVSYTTQSGEKMYFRKFFKFQVLKPLDVKTKFYNAESDLSSVTDEVFLEAQIQNITTSPMFMEKVSLEPSIMYNVAELNSVNQAGECVTTFGSRAYLQPMDTRQYLYCLKPKKEFAEKAGIIKGVTVIGKLDIVWKTNLGERGRLQTSQLQRMAPGYGDVRLSLEAIPDTVNLEEPFHITCKITNCSERTMDLVLEMCNTNSIHWCGISGRQLGKLHPSSSLCLALTLLSSVQGLQSVSGLRLTDTFLKRTYEYDDIAQVCVVSSAIKVES.

The protein belongs to the TRAPPC13 family. Part of the multisubunit TRAPP (transport protein particle) complex.

The protein is Trafficking protein particle complex subunit 13 (TRAPPC13) of Bos taurus (Bovine).